Here is a 284-residue protein sequence, read N- to C-terminus: Formamidopyrimidine-DNA glycosylase (284 aa).

Catalysis depends on Pro-2, which acts as the Schiff-base intermediate with DNA. Glu-3 (proton donor) is an active-site residue. Lys-58 acts as the Proton donor; for beta-elimination activity in catalysis. Residues His-97, Arg-120, and Arg-165 each coordinate DNA. The FPG-type zinc finger occupies 250–284 (FVYDRAGEPCKVCGTPVRQIVQGQRSTFYCTHCQH). Arg-274 acts as the Proton donor; for delta-elimination activity in catalysis.

Belongs to the FPG family. In terms of assembly, monomer. It depends on Zn(2+) as a cofactor.

It carries out the reaction Hydrolysis of DNA containing ring-opened 7-methylguanine residues, releasing 2,6-diamino-4-hydroxy-5-(N-methyl)formamidopyrimidine.. It catalyses the reaction 2'-deoxyribonucleotide-(2'-deoxyribose 5'-phosphate)-2'-deoxyribonucleotide-DNA = a 3'-end 2'-deoxyribonucleotide-(2,3-dehydro-2,3-deoxyribose 5'-phosphate)-DNA + a 5'-end 5'-phospho-2'-deoxyribonucleoside-DNA + H(+). Functionally, involved in base excision repair of DNA damaged by oxidation or by mutagenic agents. Acts as a DNA glycosylase that recognizes and removes damaged bases. Has a preference for oxidized purines, such as 7,8-dihydro-8-oxoguanine (8-oxoG). Has AP (apurinic/apyrimidinic) lyase activity and introduces nicks in the DNA strand. Cleaves the DNA backbone by beta-delta elimination to generate a single-strand break at the site of the removed base with both 3'- and 5'-phosphates. The polypeptide is Formamidopyrimidine-DNA glycosylase (Cupriavidus pinatubonensis (strain JMP 134 / LMG 1197) (Cupriavidus necator (strain JMP 134))).